The following is a 424-amino-acid chain: MDKLVITGGKRIEGEITASGSKNSSLPIIAATLLSGSGTFTLHRIPDLQDITTFRQLFDHLGAETAFSHNTLTITTANVQSVLAPYELVKKMRASIYVLGPLLARFGHARVSLPGGCAFGPRPIDLHLMAMEKLGARITIETGFIDAVAEGGRLKGATIDFPVSSVGATGNALMAAVLAEGTTIIRNAAAEPEIEALCHFLQAMGADIRGTGTTELIIHGCDSLRHVEFSNIFDRIEAGTILAAAAITGGSVTIRGVIPSHMESVLQKFSDAGCRIETTDDTVILKSTGRLKATDITAEPFPAFPTDMQAQWMALMTQAEGTSEITDHVYHERFNHIPELNRLGAHIDIEGNRAVVHGPQALSGTKVMSTDLRASASLVLAGLVAEGTTEVLRVYHLDRGYERIETRLQNLGAEIKREKYSEFG.

Residue 22–23 participates in phosphoenolpyruvate binding; that stretch reads KN. Arginine 93 is a UDP-N-acetyl-alpha-D-glucosamine binding site. Cysteine 117 (proton donor) is an active-site residue. Cysteine 117 is subject to 2-(S-cysteinyl)pyruvic acid O-phosphothioketal. Residues 122–126, aspartate 307, and valine 329 contribute to the UDP-N-acetyl-alpha-D-glucosamine site; that span reads RPIDL.

Belongs to the EPSP synthase family. MurA subfamily.

Its subcellular location is the cytoplasm. The enzyme catalyses phosphoenolpyruvate + UDP-N-acetyl-alpha-D-glucosamine = UDP-N-acetyl-3-O-(1-carboxyvinyl)-alpha-D-glucosamine + phosphate. It functions in the pathway cell wall biogenesis; peptidoglycan biosynthesis. Functionally, cell wall formation. Adds enolpyruvyl to UDP-N-acetylglucosamine. The polypeptide is UDP-N-acetylglucosamine 1-carboxyvinyltransferase (Chlorobium luteolum (strain DSM 273 / BCRC 81028 / 2530) (Pelodictyon luteolum)).